The primary structure comprises 85 residues: Large ribosomal subunit protein eL43 (85 aa).

The segment at Cys-38–Cys-59 adopts a C4-type zinc-finger fold.

Belongs to the eukaryotic ribosomal protein eL43 family. Zn(2+) is required as a cofactor.

The chain is Large ribosomal subunit protein eL43 from Thermococcus sibiricus (strain DSM 12597 / MM 739).